Here is a 344-residue protein sequence, read N- to C-terminus: TATA box-binding protein-like 2 (344 aa).

The interval 78–143 is disordered; that stretch reads NKDRTVTGNK…SNQLSSETPN (66 aa). Residues 110–120 show a composition bias toward low complexity; that stretch reads GSGLNLNSNSS. The span at 134-143 shows a compositional bias: polar residues; it reads SNQLSSETPN.

The protein belongs to the TBP family. Interacts with TAF3.

It is found in the cytoplasm. It localises to the nucleus. Its function is as follows. Transcription factor required in complex with TAF3 for the differentiation of myoblasts into myocytes. The complex replaces TFIID at specific promoters at an early stage in the differentiation process. The sequence is that of TATA box-binding protein-like 2 from Rattus norvegicus (Rat).